The chain runs to 152 residues: Protein-export protein SecB (152 aa).

Belongs to the SecB family. In terms of assembly, homotetramer, a dimer of dimers. One homotetramer interacts with 1 SecA dimer.

The protein localises to the cytoplasm. Its function is as follows. One of the proteins required for the normal export of preproteins out of the cell cytoplasm. It is a molecular chaperone that binds to a subset of precursor proteins, maintaining them in a translocation-competent state. It also specifically binds to its receptor SecA. This chain is Protein-export protein SecB, found in Rickettsia massiliae (strain Mtu5).